The primary structure comprises 357 residues: Transcription factor PCF6 (357 aa).

Residues Met1–Met29 form a disordered region. Residues Asp7 to Gly16 show a composition bias toward gly residues. A TCP domain is found at Gly52–Leu110. Disordered stretches follow at residues Ala125–Val162 and Ala281–Gln307. 2 stretches are compositionally biased toward polar residues: residues Leu142–Ser155 and Gly284–Ser295.

In terms of assembly, forms homodimers and heterodimers.

It is found in the nucleus. Functionally, transcription activator. Binds the promoter core sequence 5'-GGNCC-3'. The protein is Transcription factor PCF6 (PCF6) of Oryza sativa subsp. japonica (Rice).